The primary structure comprises 197 residues: uncharacterized protein (197 aa).

In terms of domain architecture, PfpI endopeptidase spans 29-166 (DWSVHTVSLD…FTNLILEMID (138 aa)). Cysteine 98 serves as the catalytic Nucleophile.

It belongs to the peptidase C56 family.

This is an uncharacterized protein from Bacillus subtilis (strain 168).